The primary structure comprises 423 residues: Imidazolonepropionase (423 aa).

The Fe(3+) site is built by histidine 78 and histidine 80. Histidine 78 and histidine 80 together coordinate Zn(2+). 4-imidazolone-5-propanoate contacts are provided by arginine 87, tyrosine 150, and histidine 183. Residue tyrosine 150 participates in N-formimidoyl-L-glutamate binding. Position 247 (histidine 247) interacts with Fe(3+). A Zn(2+)-binding site is contributed by histidine 247. Glutamate 250 provides a ligand contact to 4-imidazolone-5-propanoate. Aspartate 322 lines the Fe(3+) pocket. Residue aspartate 322 coordinates Zn(2+). N-formimidoyl-L-glutamate contacts are provided by asparagine 324 and glycine 326. Serine 327 contributes to the 4-imidazolone-5-propanoate binding site.

It belongs to the metallo-dependent hydrolases superfamily. HutI family. Zn(2+) is required as a cofactor. The cofactor is Fe(3+).

The protein localises to the cytoplasm. It carries out the reaction 4-imidazolone-5-propanoate + H2O = N-formimidoyl-L-glutamate. It participates in amino-acid degradation; L-histidine degradation into L-glutamate; N-formimidoyl-L-glutamate from L-histidine: step 3/3. Functionally, catalyzes the hydrolytic cleavage of the carbon-nitrogen bond in imidazolone-5-propanoate to yield N-formimidoyl-L-glutamate. It is the third step in the universal histidine degradation pathway. The chain is Imidazolonepropionase from Bacillus mycoides (strain KBAB4) (Bacillus weihenstephanensis).